Here is a 429-residue protein sequence, read N- to C-terminus: Serine hydroxymethyltransferase (429 aa).

(6S)-5,6,7,8-tetrahydrofolate contacts are provided by residues leucine 126 and 130–132; that span reads GHL. Lysine 235 carries the N6-(pyridoxal phosphate)lysine modification. Residue 359–361 participates in (6S)-5,6,7,8-tetrahydrofolate binding; that stretch reads SPF.

The protein belongs to the SHMT family. Homodimer. Pyridoxal 5'-phosphate serves as cofactor.

It localises to the cytoplasm. It catalyses the reaction (6R)-5,10-methylene-5,6,7,8-tetrahydrofolate + glycine + H2O = (6S)-5,6,7,8-tetrahydrofolate + L-serine. Its pathway is one-carbon metabolism; tetrahydrofolate interconversion. It participates in amino-acid biosynthesis; glycine biosynthesis; glycine from L-serine: step 1/1. Functionally, catalyzes the reversible interconversion of serine and glycine with tetrahydrofolate (THF) serving as the one-carbon carrier. This reaction serves as the major source of one-carbon groups required for the biosynthesis of purines, thymidylate, methionine, and other important biomolecules. Also exhibits THF-independent aldolase activity toward beta-hydroxyamino acids, producing glycine and aldehydes, via a retro-aldol mechanism. This is Serine hydroxymethyltransferase from Synechococcus sp. (strain CC9902).